The chain runs to 403 residues: Phosphoglycerate kinase (403 aa).

Substrate-binding positions include 21-23, Arg-37, 60-63, Arg-125, and Arg-158; these read DFN and HLGR. Residues Lys-209, Glu-332, and 359–362 contribute to the ATP site; that span reads GGDS.

The protein belongs to the phosphoglycerate kinase family. Monomer.

It localises to the cytoplasm. It carries out the reaction (2R)-3-phosphoglycerate + ATP = (2R)-3-phospho-glyceroyl phosphate + ADP. It functions in the pathway carbohydrate degradation; glycolysis; pyruvate from D-glyceraldehyde 3-phosphate: step 2/5. The chain is Phosphoglycerate kinase from Koribacter versatilis (strain Ellin345).